The chain runs to 359 residues: Mitochondrial glutathione transporter SLC25A39 (359 aa).

The Mitochondrial intermembrane segment spans residues 1–14 (MDDQDPGGISPLQQ). Solcar repeat units lie at residues 9–151 (ISPL…LKAF), 159–243 (SDLY…VKSQ), and 253–347 (TSVG…GKSF). Residues 15–35 (MVASGAGAVVTSLFMTPLDVV) traverse the membrane as a helical segment. Residues 36-121 (KVRLQSQRPT…VKIVRHEGTR (86 aa)) are Mitochondrial matrix-facing. [2Fe-2S] cluster contacts are provided by Cys74, Cys78, Cys88, and Cys94. The chain crosses the membrane as a helical span at residues 122-142 (TLWSGLPATLVMTVPATAIYF). Over 143–164 (TAYDQLKAFLCGQSLTSDLYAP) the chain is Mitochondrial intermembrane. The chain crosses the membrane as a helical span at residues 165 to 185 (MVAGALARMGTVTVVSPLELV). The Mitochondrial matrix segment spans residues 186 to 214 (RTKLQAQHVSYRELAACVQAAVAQGGWRS). The helical transmembrane segment at 215–235 (LWLGWGPTALRDVPFSALYWF) threads the bilayer. Residues 236–255 (NYELVKSQLNGPRQKEQTSV) are Mitochondrial intermembrane-facing. A helical transmembrane segment spans residues 256 to 276 (GISFVAGGISGMVAATLTLPF). At 277–317 (DVVKTQRQMSLGAVEAMRVKPPRVDSTWLLLRRIQAESGTR) the chain is on the mitochondrial matrix side. The chain crosses the membrane as a helical span at residues 318–338 (GLFAGFLPRIIKAAPSCAIMI). At 339-359 (STYEFGKSFFHRLNQEQPLGH) the chain is on the mitochondrial intermembrane side.

It belongs to the mitochondrial carrier (TC 2.A.29) family. Cleaved and degraded by AFG3L2; degradation by AFG3L2 is regulated by the ability of SLC25A39 to bind iron-sulfur. In absence of mitochondrial glutathione, SLC25A39 binds iron-sulfur, preventing cleavage and degradation by AFG3L2. The presence of mitochondrial glutathione prevents iron-sulfur-binding to SLC25A39, promoting cleavage and degradation by AFG3L2.

It localises to the mitochondrion inner membrane. The catalysed reaction is glutathione(in) = glutathione(out). With respect to regulation, the activity of SLC25A39 is regulated by levels of mitochondrial glutathione via its ability to bind [2Fe-2S] iron-sulfur cluster. Upon physiological levels of mitochondrial glutathione, glutathione prevents iron-sulfur-binding to SLC25A39 promoting cleavage and degradation by AFG3L2. Upon depletion of mitochondrial glutathione, SLC25A39 binds iron-sulfur, preventing cleavage and degradation by AFG3L2. In terms of biological role, mitochondrial transporter required for glutathione import into mitochondria. Glutathione, which plays key roles in oxidative metabolism, is produced exclusively in the cytosol and is imported in many organelles. Mitochondrial glutathione is required for the activity and stability of proteins containing iron-sulfur clusters, as well as erythropoiesis. This chain is Mitochondrial glutathione transporter SLC25A39 (Slc25a39), found in Rattus norvegicus (Rat).